We begin with the raw amino-acid sequence, 364 residues long: DNA replication and repair protein RecF (364 aa).

30–37 (GNNGQGKT) contributes to the ATP binding site.

Belongs to the RecF family.

It localises to the cytoplasm. Functionally, the RecF protein is involved in DNA metabolism; it is required for DNA replication and normal SOS inducibility. RecF binds preferentially to single-stranded, linear DNA. It also seems to bind ATP. The chain is DNA replication and repair protein RecF from Geotalea daltonii (strain DSM 22248 / JCM 15807 / FRC-32) (Geobacter daltonii).